Here is a 792-residue protein sequence, read N- to C-terminus: Replication factor A (792 aa).

4 DNA-binding regions (OB) span residues 81 to 140, 192 to 273, 301 to 365, and 422 to 494; these read VTGR…IRIK, VNVI…TSLT, VTVM…ANVE, and VDVV…VELS. The segment at 678–696 adopts a C4-type zinc-finger fold; that stretch reads CPSCNERLDLSDENICNFC.

In terms of assembly, probably binds DNA polymerase PolB. Binds helicase Hel308, in presence and absence of DNA.

Inhibits DNA polymerase activity of PolB, which can be overcome by RFC and PNCA. Stimulates 3'-to 5'-exonuclease activity of PolB at 30 degrees Celsius, but has no effect at 50 or 70 degrees Celsius. Bind ssDNA and replication forks; replication forks structures bind both Hel308 and this protein. Has no effect on helicase activity of Hel308; may help target the helicase to DNA substrates that require DNA re-modeling. The protein is Replication factor A (rpa) of Methanothermobacter thermautotrophicus (strain ATCC 29096 / DSM 1053 / JCM 10044 / NBRC 100330 / Delta H) (Methanobacterium thermoautotrophicum).